Consider the following 349-residue polypeptide: Hydroxymethylglutaryl-CoA synthase (349 aa).

The (3S)-3-hydroxy-3-methylglutaryl-CoA site is built by aspartate 30 and alanine 31. Glutamate 82 serves as the catalytic Proton donor/acceptor. 2 residues coordinate (3S)-3-hydroxy-3-methylglutaryl-CoA: cysteine 114 and threonine 155. Residue cysteine 114 is the Acyl-thioester intermediate of the active site. Arginine 203 contacts CoA. (3S)-3-hydroxy-3-methylglutaryl-CoA is bound by residues threonine 205 and histidine 238. Catalysis depends on histidine 238, which acts as the Proton donor/acceptor. Lysine 243 contacts CoA. The (3S)-3-hydroxy-3-methylglutaryl-CoA site is built by asparagine 270 and serine 300.

The protein belongs to the thiolase-like superfamily. Archaeal HMG-CoA synthase family. In terms of assembly, interacts with acetoacetyl-CoA thiolase that catalyzes the precedent step in the pathway and with a DUF35 protein. The acetoacetyl-CoA thiolase/HMG-CoA synthase complex channels the intermediate via a fused CoA-binding site, which allows for efficient coupling of the endergonic thiolase reaction with the exergonic HMGCS reaction.

It catalyses the reaction acetoacetyl-CoA + acetyl-CoA + H2O = (3S)-3-hydroxy-3-methylglutaryl-CoA + CoA + H(+). Its pathway is metabolic intermediate biosynthesis; (R)-mevalonate biosynthesis; (R)-mevalonate from acetyl-CoA: step 2/3. In terms of biological role, catalyzes the condensation of acetyl-CoA with acetoacetyl-CoA to form 3-hydroxy-3-methylglutaryl-CoA (HMG-CoA). Functions in the mevalonate (MVA) pathway leading to isopentenyl diphosphate (IPP), a key precursor for the biosynthesis of isoprenoid compounds that are building blocks of archaeal membrane lipids. The polypeptide is Hydroxymethylglutaryl-CoA synthase (Methanococcus vannielii (strain ATCC 35089 / DSM 1224 / JCM 13029 / OCM 148 / SB)).